We begin with the raw amino-acid sequence, 497 residues long: Serine hydroxymethyltransferase (497 aa).

Residues Leu176 and 180–182 (GHL) contribute to the (6S)-5,6,7,8-tetrahydrofolate site. An N6-(pyridoxal phosphate)lysine modification is found at Lys289.

Belongs to the SHMT family. Homodimer. Requires pyridoxal 5'-phosphate as cofactor.

It is found in the cytoplasm. It catalyses the reaction (6R)-5,10-methylene-5,6,7,8-tetrahydrofolate + glycine + H2O = (6S)-5,6,7,8-tetrahydrofolate + L-serine. It participates in one-carbon metabolism; tetrahydrofolate interconversion. Its pathway is amino-acid biosynthesis; glycine biosynthesis; glycine from L-serine: step 1/1. Functionally, catalyzes the reversible interconversion of serine and glycine with tetrahydrofolate (THF) serving as the one-carbon carrier. This reaction serves as the major source of one-carbon groups required for the biosynthesis of purines, thymidylate, methionine, and other important biomolecules. Also exhibits THF-independent aldolase activity toward beta-hydroxyamino acids, producing glycine and aldehydes, via a retro-aldol mechanism. In Chlamydia caviae (strain ATCC VR-813 / DSM 19441 / 03DC25 / GPIC) (Chlamydophila caviae), this protein is Serine hydroxymethyltransferase.